The sequence spans 738 residues: Dipeptidyl peptidase 3 (738 aa).

An N-acetylalanine modification is found at Ala2. His450 contacts Zn(2+). Glu451 is a catalytic residue. Zn(2+) is bound by residues His455 and Glu508.

The protein belongs to the peptidase M49 family. Requires Zn(2+) as cofactor.

The protein localises to the cytoplasm. It localises to the cytosol. The enzyme catalyses Release of an N-terminal dipeptide from a peptide comprising four or more residues, with broad specificity. Also acts on dipeptidyl 2-naphthylamides.. Cleaves and degrades bioactive peptides, including angiotensin, Leu-enkephalin and Met-enkephalin. Also cleaves Arg-Arg-beta-naphthylamide (in vitro). The polypeptide is Dipeptidyl peptidase 3 (Dpp3) (Mus musculus (Mouse)).